The primary structure comprises 739 residues: tRNA 5-methylaminomethyl-2-thiouridine biosynthesis bifunctional protein MnmC (739 aa).

The tract at residues 1 to 282 is tRNA (mnm(5)s(2)U34)-methyltransferase; it reads MDKVTPAKLS…KREMLTATKL (282 aa). An FAD-dependent cmnm(5)s(2)U34 oxidoreductase region spans residues 330–739; it reads IGAGVCGLMA…HRSSLKKPLS (410 aa).

It in the N-terminal section; belongs to the methyltransferase superfamily. tRNA (mnm(5)s(2)U34)-methyltransferase family. The protein in the C-terminal section; belongs to the DAO family. FAD is required as a cofactor.

Its subcellular location is the cytoplasm. The enzyme catalyses 5-aminomethyl-2-thiouridine(34) in tRNA + S-adenosyl-L-methionine = 5-methylaminomethyl-2-thiouridine(34) in tRNA + S-adenosyl-L-homocysteine + H(+). In terms of biological role, catalyzes the last two steps in the biosynthesis of 5-methylaminomethyl-2-thiouridine (mnm(5)s(2)U) at the wobble position (U34) in tRNA. Catalyzes the FAD-dependent demodification of cmnm(5)s(2)U34 to nm(5)s(2)U34, followed by the transfer of a methyl group from S-adenosyl-L-methionine to nm(5)s(2)U34, to form mnm(5)s(2)U34. The polypeptide is tRNA 5-methylaminomethyl-2-thiouridine biosynthesis bifunctional protein MnmC (Psychrobacter sp. (strain PRwf-1)).